Consider the following 358-residue polypeptide: Phospho-N-acetylmuramoyl-pentapeptide-transferase (358 aa).

Transmembrane regions (helical) follow at residues 13-47 (LFIL…SIFI), 81-101 (MGGI…TINL), 106-126 (LILL…DDYL), 148-168 (ISII…LITI), 171-191 (SWAI…LVGI), 201-221 (LDGL…TEIL), 228-248 (LFVF…FLKY), 255-275 (IFMG…IALL), 278-298 (SIFT…SVII), and 336-356 (IVEN…VLKI).

The protein belongs to the glycosyltransferase 4 family. MraY subfamily. Requires Mg(2+) as cofactor.

It localises to the cell inner membrane. It catalyses the reaction UDP-N-acetyl-alpha-D-muramoyl-L-alanyl-gamma-D-glutamyl-meso-2,6-diaminopimeloyl-D-alanyl-D-alanine + di-trans,octa-cis-undecaprenyl phosphate = di-trans,octa-cis-undecaprenyl diphospho-N-acetyl-alpha-D-muramoyl-L-alanyl-D-glutamyl-meso-2,6-diaminopimeloyl-D-alanyl-D-alanine + UMP. It participates in cell wall biogenesis; peptidoglycan biosynthesis. In terms of biological role, catalyzes the initial step of the lipid cycle reactions in the biosynthesis of the cell wall peptidoglycan: transfers peptidoglycan precursor phospho-MurNAc-pentapeptide from UDP-MurNAc-pentapeptide onto the lipid carrier undecaprenyl phosphate, yielding undecaprenyl-pyrophosphoryl-MurNAc-pentapeptide, known as lipid I. This chain is Phospho-N-acetylmuramoyl-pentapeptide-transferase, found in Prochlorococcus marinus (strain MIT 9301).